A 420-amino-acid chain; its full sequence is Serine hydroxymethyltransferase (420 aa).

(6S)-5,6,7,8-tetrahydrofolate is bound by residues Leu-121 and 125–127; that span reads GHL. The residue at position 229 (Lys-229) is an N6-(pyridoxal phosphate)lysine.

Belongs to the SHMT family. As to quaternary structure, homodimer. Pyridoxal 5'-phosphate is required as a cofactor.

It is found in the cytoplasm. The enzyme catalyses (6R)-5,10-methylene-5,6,7,8-tetrahydrofolate + glycine + H2O = (6S)-5,6,7,8-tetrahydrofolate + L-serine. Its pathway is one-carbon metabolism; tetrahydrofolate interconversion. The protein operates within amino-acid biosynthesis; glycine biosynthesis; glycine from L-serine: step 1/1. Functionally, catalyzes the reversible interconversion of serine and glycine with tetrahydrofolate (THF) serving as the one-carbon carrier. This reaction serves as the major source of one-carbon groups required for the biosynthesis of purines, thymidylate, methionine, and other important biomolecules. Also exhibits THF-independent aldolase activity toward beta-hydroxyamino acids, producing glycine and aldehydes, via a retro-aldol mechanism. In Glaesserella parasuis serovar 5 (strain SH0165) (Haemophilus parasuis), this protein is Serine hydroxymethyltransferase.